Reading from the N-terminus, the 162-residue chain is Caveolin-2 (162 aa).

Topologically, residues 1–86 (MGLETEKADV…FEISKYVLYK (86 aa)) are cytoplasmic. Residue Tyr-19 is modified to Phosphotyrosine; by SRC. Phosphoserine is present on residues Ser-20 and Ser-23. Tyr-27 is subject to Phosphotyrosine; by SRC. A Phosphoserine modification is found at Ser-36. The segment at residues 87 to 107 (FLTVFLAIPLAFVAGILFATL) is an intramembrane region (helical). At 108-162 (SCLHIWIIMPFVKTCLMVLPSVQTIWKSVTDVIIAPLCTSVGRSFSSISLRLSQD) the chain is on the cytoplasmic side.

Belongs to the caveolin family. In terms of assembly, monomer or homodimer. Interacts with CAV1; the interaction forms a stable heterooligomeric complex that is required for targeting to lipid rafts and for caveolae formation. Tyrosine phosphorylated forms do not form heterooligomers with the Tyr-19-phosphorylated form existing as a monomer or dimer, and the Tyr-27-form as a monomer only. Interacts (tyrosine phosphorylated form) with the SH2 domain-containing proteins, RASA1, NCK1 and SRC. Interacts (tyrosine phosphorylated form) with INSR, the interaction (Tyr-27-phosphorylated form) is increased on insulin stimulation. Interacts (Tyr-19 phosphorylated form) with MAPK1 (phosphorylated form); the interaction, promoted by insulin, leads to nuclear location and MAPK1 activation. Interacts with STAT3; the interaction is increased on insulin-induced tyrosine phosphorylation leading to STAT activation. In terms of processing, phosphorylated on serine and tyrosine residues. CAV1 promotes phosphorylation on Ser-23 which then targets the complex to the plasma membrane, lipid rafts and caveolae. Phosphorylation on Ser-36 appears to modulate mitosis in endothelial cells. Phosphorylation on both Tyr-19 and Tyr-27 is required for insulin-induced 'Ser-727' phosphorylation of STAT3 and its activation. Phosphorylation on Tyr-19 is required for insulin-induced phosphorylation of MAPK1 and DNA binding of STAT3. Tyrosine phosphorylation is induced by both EGF and insulin (By. similarity).

It is found in the nucleus. The protein localises to the cytoplasm. Its subcellular location is the golgi apparatus membrane. The protein resides in the cell membrane. It localises to the membrane. It is found in the caveola. Functionally, may act as a scaffolding protein within caveolar membranes. Interacts directly with G-protein alpha subunits and can functionally regulate their activity. Acts as an accessory protein in conjunction with CAV1 in targeting to lipid rafts and driving caveolae formation. The Ser-36 phosphorylated form has a role in modulating mitosis in endothelial cells. Positive regulator of cellular mitogenesis of the MAPK signaling pathway. Required for the insulin-stimulated nuclear translocation and activation of MAPK1 and STAT3, and the subsequent regulation of cell cycle progression. The protein is Caveolin-2 (CAV2) of Otolemur garnettii (Small-eared galago).